The sequence spans 464 residues: E3 ubiquitin-protein ligase parkin (464 aa).

In terms of domain architecture, Ubiquitin-like spans 1-76 (MIVFVRFNSS…VHIVQRPRRR (76 aa)). Serine 65 carries the post-translational modification Phosphoserine; by PINK1. Positions 70–96 (VQRPRRRSHETNASGGDEPQSTSEGSI) are disordered. Positions 77–236 (SHETNASGGD…LITSNRRSIP (160 aa)) are necessary for PINK1-dependent localization to mitochondria. Phosphothreonine is present on threonine 80. The span at 80–96 (TNASGGDEPQSTSEGSI) shows a compositional bias: polar residues. The RING-type 0; atypical zinc finger occupies 140-224 (PTYNSFFIYC…PTSDKDTSVA (85 aa)). Threonine 174 is modified (phosphothreonine; by PINK1). An SYT11 binding 1 region spans residues 203-237 (TRAEFFFKCGAHPTSDKDTSVALNLITSNRRSIPC). At threonine 216 the chain carries Phosphothreonine. The segment at 233–464 (RSIPCIACTD…ACMGDHWFDV (232 aa)) is TRIAD supradomain. 10 residues coordinate Zn(2+): cysteine 237, cysteine 240, cysteine 252, histidine 256, cysteine 259, cysteine 262, cysteine 288, cysteine 292, cysteine 331, and cysteine 336. Residues 237 to 292 (CIACTDVRSPVLVFQCNHRHVICLDCFHLYCVTRLNDRQFVHDAQLGYSLPCVAGC) form an RING-type 1 zinc finger. Positions 256–292 (HVICLDCFHLYCVTRLNDRQFVHDAQLGYSLPCVAGC) are SYT11 binding 2. An IBR-type zinc finger spans residues 312-376 (TRYQQYGAEE…CKEAYHEGDC (65 aa)). Lysine 348 is covalently cross-linked (Glycyl lysine isopeptide (Lys-Gly) (interchain with G-Cter in ISG15)). The Zn(2+) site is built by cysteine 351, cysteine 359, cysteine 364, and cysteine 367. Lysine 368 participates in a covalent cross-link: Glycyl lysine isopeptide (Lys-Gly) (interchain with G-Cter in ISG15). Residues histidine 372 and cysteine 376 each coordinate Zn(2+). The REP stretch occupies residues 377–409 (DSLLEPSGATSQAYRVDKRAAEQARWEEASKET). The Zn(2+) site is built by cysteine 417 and cysteine 420. The RING-type 2; atypical zinc-finger motif lies at 417–448 (CPRCNVPIEKNGGCMHMKCPQPQCKLEWCWNC). The active site involves cysteine 430. Cysteine 435, cysteine 440, cysteine 445, cysteine 448, cysteine 456, and histidine 460 together coordinate Zn(2+).

The protein belongs to the RBR family. Parkin subfamily. In terms of assembly, forms an E3 ubiquitin ligase complex with UBE2L3 or UBE2L6. Mediates 'Lys-63'-linked polyubiquitination by associating with UBE2V1. Part of a SCF-like complex, consisting of PRKN, CUL1 and FBXW7. Interacts with SNCAIP. Binds to the C2A and C2B domains of SYT11. Interacts and regulates the turnover of SEPTIN5. Part of a complex, including STUB1, HSP70 and GPR37. The amount of STUB1 in the complex increases during ER stress. STUB1 promotes the dissociation of HSP70 from PRKN and GPR37, thus facilitating PRKN-mediated GPR37 ubiquitination. HSP70 transiently associates with unfolded GPR37 and inhibits the E3 activity of PRKN, whereas, STUB1 enhances the E3 activity of PRKN through promotion of dissociation of HSP70 from PRKN-GPR37 complexes. Interacts with PSMD4 and PACRG. Interacts with LRRK2. Interacts with RANBP2. Interacts with SUMO1 but not SUMO2, which promotes nuclear localization and autoubiquitination. Interacts (via first RING-type domain) with AIMP2 (via N-terminus). Interacts with PSMA7 and RNF41. Interacts with PINK1. Forms a complex with PINK1 and PARK7. Interacts with CHPF, the interaction with isoform 2 may facilitate PRKN transport into the mitochondria. Interacts with MFN2 (phosphorylated), promotes PRKN localization in dysfunctional depolarized mitochondria. Interacts with FBXO7; this promotes translocation to dysfunctional depolarized mitochondria. Interacts with ZNF746. Interacts with heat shock protein 70 family members, including HSPA1L, HSPA1A and HSPA8; interaction HSPA1L promotes translocation to damaged mitochondria. Interacts with BAG4 and, to a lesser extent, BAG5; interaction with BAG4 inhibits translocation to damaged mitochondria. Forms a complex with PRKN and PARK7. Interacts with AMBRA1. In terms of processing, auto-ubiquitinates in an E2-dependent manner leading to its own degradation. Also polyubiquitinated by RNF41 for proteasomal degradation. Post-translationally, S-nitrosylated. Phosphorylated. Activation requires phosphorylation at Ser-65 by PINK1 and binding to PINK1 phosphorylated ubiquitin. Phosphorylation at Thr-174 by PINK1 and at Thr-216 is important for mitochondrial localization. In terms of tissue distribution, expressed in all subdivisions of the brain (at protein level). Highly expressed in brainstem, cranial nerve, pontine, cerebellar nuclei, indusium griseum, nuclei reticularis, strata oriens and laccunosum moleculare of the hippocampal CA2 region. Low levels were found in the telencephalon and diencephalon. Expressed in heart, liver, skeletal muscle, kidney and testis.

Its subcellular location is the cytoplasm. It localises to the cytosol. It is found in the nucleus. The protein localises to the endoplasmic reticulum. The protein resides in the mitochondrion. Its subcellular location is the mitochondrion outer membrane. It localises to the cell projection. It is found in the neuron projection. The protein localises to the postsynaptic density. The protein resides in the presynapse. It carries out the reaction [E2 ubiquitin-conjugating enzyme]-S-ubiquitinyl-L-cysteine + [acceptor protein]-L-lysine = [E2 ubiquitin-conjugating enzyme]-L-cysteine + [acceptor protein]-N(6)-ubiquitinyl-L-lysine.. It functions in the pathway protein modification; protein ubiquitination. In the autoinhibited state the side chain of Phe-462 inserts into a hydrophobic groove in RING-0, occluding the ubiquitin acceptor site Cys-430, whereas the REP repressor element binds RING-1 and blocks its E2-binding site. Activation of PRKN requires 2 steps: (1) phosphorylation at Ser-65 by PINK1 and (2) binding to phosphorylated ubiquitin, leading to unlock repression of the catalytic Cys-430 by the RING-0 region via an allosteric mechanism and converting PRKN to its fully-active form. According to another report, phosphorylation at Ser-65 by PINK1 is not essential for activation and only binding to phosphorylated ubiquitin is essential to unlock repression. In addition, ISG15 conjugation positively regulates its ubiquitin E3 ligase activity by suppressing the intramolecular interaction that maintains its autoinhibited conformation. In terms of biological role, functions within a multiprotein E3 ubiquitin ligase complex, catalyzing the covalent attachment of ubiquitin moieties onto substrate proteins. Substrates include SYT11 and VDAC1. Other substrates are BCL2, CCNE1, GPR37, RHOT1/MIRO1, MFN1, MFN2, STUB1, SNCAIP, SEPTIN5, TOMM20, USP30, ZNF746, MIRO1 and AIMP2. Mediates monoubiquitination as well as 'Lys-6', 'Lys-11', 'Lys-48'-linked and 'Lys-63'-linked polyubiquitination of substrates depending on the context. Participates in the removal and/or detoxification of abnormally folded or damaged protein by mediating 'Lys-63'-linked polyubiquitination of misfolded proteins such as PARK7: 'Lys-63'-linked polyubiquitinated misfolded proteins are then recognized by HDAC6, leading to their recruitment to aggresomes, followed by degradation. Mediates 'Lys-63'-linked polyubiquitination of a 22 kDa O-linked glycosylated isoform of SNCAIP, possibly playing a role in Lewy-body formation. Mediates monoubiquitination of BCL2, thereby acting as a positive regulator of autophagy. Protects against mitochondrial dysfunction during cellular stress, by acting downstream of PINK1 to coordinate mitochondrial quality control mechanisms that remove and replace dysfunctional mitochondrial components. Depending on the severity of mitochondrial damage and/or dysfunction, activity ranges from preventing apoptosis and stimulating mitochondrial biogenesis to regulating mitochondrial dynamics and eliminating severely damaged mitochondria via mitophagy. Activation and recruitment onto the outer membrane of damaged/dysfunctional mitochondria (OMM) requires PINK1-mediated phosphorylation of both PRKN and ubiquitin. After mitochondrial damage, functions with PINK1 to mediate the decision between mitophagy or preventing apoptosis by inducing either the poly- or monoubiquitination of VDAC1, respectively; polyubiquitination of VDAC1 promotes mitophagy, while monoubiquitination of VDAC1 decreases mitochondrial calcium influx which ultimately inhibits apoptosis. When cellular stress results in irreversible mitochondrial damage, promotes the autophagic degradation of dysfunctional depolarized mitochondria (mitophagy) by promoting the ubiquitination of mitochondrial proteins such as TOMM20, RHOT1/MIRO1, MFN1 and USP30. Preferentially assembles 'Lys-6'-, 'Lys-11'- and 'Lys-63'-linked polyubiquitin chains, leading to mitophagy. The PINK1-PRKN pathway also promotes fission of damaged mitochondria by PINK1-mediated phosphorylation which promotes the PRKN-dependent degradation of mitochondrial proteins involved in fission such as MFN2. This prevents the refusion of unhealthy mitochondria with the mitochondrial network or initiates mitochondrial fragmentation facilitating their later engulfment by autophagosomes. Regulates motility of damaged mitochondria via the ubiquitination and subsequent degradation of MIRO1 and MIRO2; in motor neurons, this likely inhibits mitochondrial intracellular anterograde transport along the axons which probably increases the chance of the mitochondria undergoing mitophagy in the soma. Involved in mitochondrial biogenesis via the 'Lys-48'-linked polyubiquitination of transcriptional repressor ZNF746/PARIS which leads to its subsequent proteasomal degradation and allows activation of the transcription factor PPARGC1A. Limits the production of reactive oxygen species (ROS). Regulates cyclin-E during neuronal apoptosis. In collaboration with CHPF isoform 2, may enhance cell viability and protect cells from oxidative stress. Independently of its ubiquitin ligase activity, protects from apoptosis by the transcriptional repression of p53/TP53. May protect neurons against alpha synuclein toxicity, proteasomal dysfunction, GPR37 accumulation, and kainate-induced excitotoxicity. May play a role in controlling neurotransmitter trafficking at the presynaptic terminal and in calcium-dependent exocytosis. May represent a tumor suppressor gene. In Mus musculus (Mouse), this protein is E3 ubiquitin-protein ligase parkin.